The following is a 181-amino-acid chain: ATP synthase subunit b (181 aa).

Residues 16-36 (LIPPIPELVIGLIAFVIVFGF) form a helical membrane-spanning segment.

The protein belongs to the ATPase B chain family. As to quaternary structure, F-type ATPases have 2 components, F(1) - the catalytic core - and F(0) - the membrane proton channel. F(1) has five subunits: alpha(3), beta(3), gamma(1), delta(1), epsilon(1). F(0) has three main subunits: a(1), b(2) and c(10-14). The alpha and beta chains form an alternating ring which encloses part of the gamma chain. F(1) is attached to F(0) by a central stalk formed by the gamma and epsilon chains, while a peripheral stalk is formed by the delta and b chains.

It is found in the cell membrane. Its function is as follows. F(1)F(0) ATP synthase produces ATP from ADP in the presence of a proton or sodium gradient. F-type ATPases consist of two structural domains, F(1) containing the extramembraneous catalytic core and F(0) containing the membrane proton channel, linked together by a central stalk and a peripheral stalk. During catalysis, ATP synthesis in the catalytic domain of F(1) is coupled via a rotary mechanism of the central stalk subunits to proton translocation. Component of the F(0) channel, it forms part of the peripheral stalk, linking F(1) to F(0). The polypeptide is ATP synthase subunit b (Streptomyces lividans).